Here is a 614-residue protein sequence, read N- to C-terminus: MDSDFGIPRELSPLQQLRSQYKPELPPCLQGTTVRVELGDGTTVAEAADSHTMARAFPHTLGQPLAHFLRETAQVPDAHIITELPSVRVGIVFCGRQAPGGHNVIWGLFEALKVHNAKSTLLGFLGGSEGLFAQKTLEITDDILQTYKNQGGYDLLGRTKDQIKTTEQVNAALKACTDLKLDGLVIIGGVISNTDAAHLAEFFAAAKCSTKVVGVPVTTNGDLKNQFVEANVGFDTICKVNSQLISNACTDALSAEKYYYFIRLMGRKHSHVALECTLQSHPNMVILGEEVAASKLTIFDIAKQICDAVQARAVEDKNHGVILIPEGLIVSIPEVYALLKEIHGLLRQGVSADKISTQLSPWSSALFEFLPPFIKKQLLLHPESDDSAQLSQIETEKLLAYLVETEMNKRLKEGTYKGKKFNAICHFFGYQARGSLPSKFDCDYAYVLGHICYHILAAGLNGYMATVTNLKSPVNKWKCGATPITAMMTVKHWSQDASYTLTSIGRPAIHPAMVDLKGKAYDLLRQNAQKFLMEDLYRNPGPLQYDGPGADAKAVSLCVEDQDYMGRIKKLQEYLDQVRTIVKPGCSQDVLKAALSVMASVTDVLTTISSNGGQ.

This sequence belongs to the phosphofructokinase type A (PFKA) family. PPi-dependent PFK group II subfamily. Clade 'Long' sub-subfamily. In terms of assembly, tetramer of two alpha (regulatory) and two beta (catalytic) chains. In terms of tissue distribution, expressed in leaves, roots, and flowers (e.g. sepals, petals, stamen and gynoecium).

The protein localises to the cytoplasm. The protein operates within carbohydrate degradation; glycolysis; D-glyceraldehyde 3-phosphate and glycerone phosphate from D-glucose: step 3/4. Its activity is regulated as follows. Allosterically activated by fructose 2,6-bisphosphate. Functionally, regulatory subunit of pyrophosphate--fructose 6-phosphate 1-phosphotransferase. This is Pyrophosphate--fructose 6-phosphate 1-phosphotransferase subunit alpha 1 from Arabidopsis thaliana (Mouse-ear cress).